The following is a 1388-amino-acid chain: DNA-directed RNA polymerase subunit beta' (1388 aa).

Positions 65, 67, 80, and 83 each coordinate Zn(2+). Mg(2+)-binding residues include aspartate 456, aspartate 458, and aspartate 460. Zn(2+) contacts are provided by cysteine 812, cysteine 887, cysteine 894, and cysteine 897.

Belongs to the RNA polymerase beta' chain family. The RNAP catalytic core consists of 2 alpha, 1 beta, 1 beta' and 1 omega subunit. When a sigma factor is associated with the core the holoenzyme is formed, which can initiate transcription. Mg(2+) serves as cofactor. The cofactor is Zn(2+).

It catalyses the reaction RNA(n) + a ribonucleoside 5'-triphosphate = RNA(n+1) + diphosphate. Its function is as follows. DNA-dependent RNA polymerase catalyzes the transcription of DNA into RNA using the four ribonucleoside triphosphates as substrates. This Protochlamydia amoebophila (strain UWE25) protein is DNA-directed RNA polymerase subunit beta'.